The primary structure comprises 525 residues: Probable CoA ligase CCL9 (525 aa).

ATP contacts are provided by residues 171 to 179 (TSGTTSRPK), 311 to 316 (EAYAMT), Asp-395, 407 to 410 (LVGR), and Lys-501. An SBD1 region spans residues 242 to 311 (SASTFWSDMI…EESFGAPVLE (70 aa)). The SBD2 stretch occupies residues 312–375 (AYAMTEAAHL…IRGPNVTKGY (64 aa)).

This sequence belongs to the ATP-dependent AMP-binding enzyme family.

The protein localises to the cytoplasm. The protein resides in the cytosol. The protein is Probable CoA ligase CCL9 of Humulus lupulus (European hop).